Here is a 935-residue protein sequence, read N- to C-terminus: Protocadherin gamma-A11 (935 aa).

Residues 1 to 29 (MANRLQRGDRSRLLLLLCIFLGTLRGFRA) form the signal peptide. 6 consecutive Cadherin domains span residues 30 to 134 (RQIR…APSF), 135 to 243 (QEDE…IPMF), 244 to 348 (TQSV…APEI), 349 to 453 (TITS…PPVF), 454 to 563 (PHSS…APEI), and 571 to 677 (DGST…ADLG). The Extracellular segment spans residues 30–693 (RQIRYSVPEE…NSETSDLSLY (664 aa)). Residue Asn-48 is glycosylated (N-linked (GlcNAc...) asparagine). N-linked (GlcNAc...) asparagine glycans are attached at residues Asn-255, Asn-266, Asn-420, and Asn-546. Residues 694–714 (LVVAVAAVSCIFLVFVIVLLA) traverse the membrane as a helical segment. The Cytoplasmic segment spans residues 715 to 935 (LRLWRWHKSR…KKKSGKKEKK (221 aa)). Disordered stretches follow at residues 805–844 (CDPT…WPNN) and 905–935 (ATLT…KEKK). A compositionally biased stretch (polar residues) spans 807 to 844 (PTSNQQAPPNTDWRFSQAQRPGTSGSQNGDDTGTWPNN). Basic residues predominate over residues 925–935 (NKKKSGKKEKK).

The protein localises to the cell membrane. Potential calcium-dependent cell-adhesion protein. May be involved in the establishment and maintenance of specific neuronal connections in the brain. This is Protocadherin gamma-A11 (PCDHGA11) from Homo sapiens (Human).